The primary structure comprises 371 residues: Queuine tRNA-ribosyltransferase (371 aa).

Asp-93 functions as the Proton acceptor in the catalytic mechanism. Residues 93 to 97 (DSGGF), Asp-147, Gln-191, and Gly-218 each bind substrate. An RNA binding region spans residues 249–255 (GVGTPLD). The active-site Nucleophile is the Asp-268. Positions 273–277 (TRNAR) are RNA binding; important for wobble base 34 recognition. Cys-306, Cys-308, Cys-311, and His-337 together coordinate Zn(2+).

The protein belongs to the queuine tRNA-ribosyltransferase family. Homodimer. Within each dimer, one monomer is responsible for RNA recognition and catalysis, while the other monomer binds to the replacement base PreQ1. The cofactor is Zn(2+).

The catalysed reaction is 7-aminomethyl-7-carbaguanine + guanosine(34) in tRNA = 7-aminomethyl-7-carbaguanosine(34) in tRNA + guanine. The protein operates within tRNA modification; tRNA-queuosine biosynthesis. Functionally, catalyzes the base-exchange of a guanine (G) residue with the queuine precursor 7-aminomethyl-7-deazaguanine (PreQ1) at position 34 (anticodon wobble position) in tRNAs with GU(N) anticodons (tRNA-Asp, -Asn, -His and -Tyr). Catalysis occurs through a double-displacement mechanism. The nucleophile active site attacks the C1' of nucleotide 34 to detach the guanine base from the RNA, forming a covalent enzyme-RNA intermediate. The proton acceptor active site deprotonates the incoming PreQ1, allowing a nucleophilic attack on the C1' of the ribose to form the product. After dissociation, two additional enzymatic reactions on the tRNA convert PreQ1 to queuine (Q), resulting in the hypermodified nucleoside queuosine (7-(((4,5-cis-dihydroxy-2-cyclopenten-1-yl)amino)methyl)-7-deazaguanosine). In Lawsonia intracellularis (strain PHE/MN1-00), this protein is Queuine tRNA-ribosyltransferase.